The chain runs to 335 residues: Ubiquinone biosynthesis protein COQ4, mitochondrial (335 aa).

The transit peptide at 1 to 10 directs the protein to the mitochondrion; it reads MLRLSLLRST. Zn(2+)-binding residues include His210, Asp211, His214, and Glu226.

The protein belongs to the COQ4 family. Component of a multi-subunit COQ enzyme complex, composed of at least COQ3, COQ4, COQ5, COQ6, COQ7 and COQ9. Interacts with COQ3. Zn(2+) is required as a cofactor.

It is found in the mitochondrion inner membrane. It carries out the reaction 4-hydroxy-3-methoxy-5-(all-trans-hexaprenyl)benzoate + H(+) = 2-methoxy-6-(all-trans-hexaprenyl)phenol + CO2. The protein operates within cofactor biosynthesis; ubiquinone biosynthesis. Functionally, lyase that catalyzes the C1-decarboxylation of 4-hydroxy-3-methoxy-5-(all-trans-hexaprenyl)benzoic acid into 2-methoxy-6-(all-trans-hexaprenyl)phenol during ubiquinone biosynthesis. The polypeptide is Ubiquinone biosynthesis protein COQ4, mitochondrial (Saccharomyces cerevisiae (strain RM11-1a) (Baker's yeast)).